Here is a 208-residue protein sequence, read N- to C-terminus: Anti-sigma-W factor RsiW (208 aa).

Topologically, residues 1 to 87 (MSCPEQIVQL…ASVKRWFRTH (87 aa)) are cytoplasmic. Residues Cys-3, His-30, Cys-34, and Cys-37 each coordinate Zn(2+). The chain crosses the membrane as a helical span at residues 88 to 108 (PVIAAAAVFIILMGGGFFNSW). The Extracellular portion of the chain corresponds to 109-208 (HNDHNFSVSK…LDAFNPNGEE (100 aa)).

The protein belongs to the zinc-associated anti-sigma factor (ZAS) superfamily. Anti-sigma-W factor family. As to quaternary structure, forms a heterodimer with cognate sigma factor SigW, which probably prevents SigW from binding to DNA. Requires Zn(2+) as cofactor. Is processed by successive proteolytic events. First, the extracellular region of RsiW is cleaved by PrsW (site-1 cleavage) in response to cell envelope stresses. In a reconstituted E.coli system PrsW cuts between Ala-168 and Ser-169 followed by trimming by E.coli Tsp; the endogenous extracellular exopeptidase responsible for the event in B.subtilis has not been identified. Next, it undergoes cleavage at an intramembrane site (site-2 cleavage) mediated by RasP. This cleavage uncovers a cryptic proteolytic tag with conserved alanine residues in the transmembrane segment, that is recognized mainly by the ClpXP protease, which completely degrades the protein in the cytoplasm and leads to the induction of the sigma-W-controlled genes.

The protein localises to the cell membrane. The anti-sigma factor for extracytoplasmic function (ECF) sigma factor sigma-W (SigW). Holds SigW, its cognate ECF sigma factor, in an inactive form until released by regulated intramembrane proteolysis (RIP). SigW and RsiW mediate cell response to cell wall stress. RIP occurs when an extracytoplasmic signal triggers a concerted proteolytic cascade to transmit information and elicit cellular responses. The membrane-spanning regulatory substrate protein is first cut periplasmically (site-1 protease, S1P, PrsW), then within the membrane itself (site-2 protease, S2P, RasP), while cytoplasmic proteases finish degrading the anti-sigma factor, liberating sigma-W. In Bacillus subtilis (strain 168), this protein is Anti-sigma-W factor RsiW (rsiW).